Here is a 107-residue protein sequence, read N- to C-terminus: Ig kappa chain V-VI region J539 (107 aa).

The tract at residues 1–23 (EIVLTQSPAITAASLGQKVTITC) is framework-1. C23 and C87 form a disulfide bridge. The interval 24-33 (SASSSVSSLH) is complementarity-determining-1. The tract at residues 34 to 48 (WYQQKSGTSPKPWIY) is framework-2. Residues 49-55 (EISKLAS) are complementarity-determining-2. The framework-3 stretch occupies residues 56–87 (GVPARFSGSGSGTSYSLTINTMEAEDAAIYYC). Positions 88–96 (QQWTYPLIT) are complementarity-determining-3. The interval 97–106 (FGAGTKLELK) is framework-4.

The protein is Ig kappa chain V-VI region J539 of Mus musculus (Mouse).